Reading from the N-terminus, the 181-residue chain is CASP-like protein UU-1 (181 aa).

Over 1-30 (MTMELESQEVVVETTTAAAAARAASAAHVR) the chain is Cytoplasmic. The chain crosses the membrane as a helical span at residues 31-51 (TTVALRLLAFAASLAAAVVVA). The Extracellular portion of the chain corresponds to 52–65 (TNRQERWGITVTFK). Residues 66-86 (MFAVWEAFVAINFACAAYALL) traverse the membrane as a helical segment. The Cytoplasmic segment spans residues 87 to 107 (TAVFVKKLVSKHWLHHMDQFT). The helical transmembrane segment at 108-128 (VNLQAASTAGAGAVGSVAMWG) threads the bilayer. Topologically, residues 129-147 (NEPSGWYAVCRLYRLYCDR) are extracellular. A helical transmembrane segment spans residues 148–168 (GAVSLALAFVAFVAFGVASSL). The Cytoplasmic segment spans residues 169–181 (SRYPRAPPPPAPR).

It belongs to the Casparian strip membrane proteins (CASP) family. As to quaternary structure, homodimer and heterodimers.

It is found in the cell membrane. The chain is CASP-like protein UU-1 from Sorghum bicolor (Sorghum).